We begin with the raw amino-acid sequence, 344 residues long: N-acetyl-gamma-glutamyl-phosphate reductase (344 aa).

The active site involves cysteine 150.

This sequence belongs to the NAGSA dehydrogenase family. Type 1 subfamily.

The protein resides in the cytoplasm. The catalysed reaction is N-acetyl-L-glutamate 5-semialdehyde + phosphate + NADP(+) = N-acetyl-L-glutamyl 5-phosphate + NADPH + H(+). It participates in amino-acid biosynthesis; L-arginine biosynthesis; N(2)-acetyl-L-ornithine from L-glutamate: step 3/4. In terms of biological role, catalyzes the NADPH-dependent reduction of N-acetyl-5-glutamyl phosphate to yield N-acetyl-L-glutamate 5-semialdehyde. The sequence is that of N-acetyl-gamma-glutamyl-phosphate reductase from Pseudomonas savastanoi pv. phaseolicola (strain 1448A / Race 6) (Pseudomonas syringae pv. phaseolicola (strain 1448A / Race 6)).